A 427-amino-acid chain; its full sequence is Hydroxylamine reductase (427 aa).

Residues Cys3, Cys6, Cys15, and Cys21 each coordinate [4Fe-4S] cluster. Hybrid [4Fe-2O-2S] cluster is bound by residues His129, Glu153, Cys197, Cys283, Cys311, Cys336, Glu370, and Lys372. The residue at position 283 (Cys283) is a Cysteine persulfide.

It belongs to the HCP family. [4Fe-4S] cluster is required as a cofactor. Requires hybrid [4Fe-2O-2S] cluster as cofactor.

It is found in the cytoplasm. The catalysed reaction is A + NH4(+) + H2O = hydroxylamine + AH2 + H(+). Functionally, catalyzes the reduction of hydroxylamine to form NH(3) and H(2)O. This Moorella thermoacetica (strain ATCC 39073 / JCM 9320) protein is Hydroxylamine reductase.